The chain runs to 581 residues: Tricyclene synthase Oc15, chloroplastic (581 aa).

Residues 1-68 (MAFCISYVGA…ALCLNEHSLS (68 aa)) constitute a chloroplast transit peptide. Residues Asn-27, Asn-206, and Asn-319 are each glycosylated (N-linked (GlcNAc...) asparagine). Residues Asp-338 and Asp-342 each coordinate Mg(2+). Residues 338-342 (DDIFD) carry the DDXXD motif motif. 2 N-linked (GlcNAc...) asparagine glycosylation sites follow: Asn-384 and Asn-465. Residues Asn-482, Ser-486, and Glu-490 each coordinate Mg(2+). Residue Asn-509 is glycosylated (N-linked (GlcNAc...) asparagine).

The protein belongs to the terpene synthase family. Tpsg subfamily. It depends on Mg(2+) as a cofactor. Mn(2+) serves as cofactor. Accumulates in flowers; mostly expressed in both upper and lower petal lobes, and, to a lower extent, in tube and stamens.

The protein resides in the plastid. It is found in the chloroplast stroma. It carries out the reaction (2E)-geranyl diphosphate = tricyclene + diphosphate. The catalysed reaction is (2E)-geranyl diphosphate = beta-myrcene + diphosphate. It participates in secondary metabolite biosynthesis; terpenoid biosynthesis. In terms of biological role, contributes to floral scent emission. This is Tricyclene synthase Oc15, chloroplastic (Oc15) from Antirrhinum majus (Garden snapdragon).